The chain runs to 101 residues: Protein Tat (101 aa).

The interval 1-24 (MEPVDPRLEPWKHPGSQPKTACTN) is interaction with human CREBBP. Positions 1–48 (MEPVDPRLEPWKHPGSQPKTACTNCYCKKCCFHCQVCFITKGLGISYG) are transactivation. 3 residues coordinate Zn(2+): Cys-22, Cys-25, and Cys-27. A cysteine-rich region spans residues 22 to 37 (CTNCYCKKCCFHCQVC). At Lys-28 the chain carries N6-acetyllysine; by host PCAF. Zn(2+)-binding residues include Cys-30, His-33, Cys-34, and Cys-37. Residues 38-48 (FITKGLGISYG) form a core region. Residues 48–57 (GRKKRRQRRR) are compositionally biased toward basic residues. The tract at residues 48 to 101 (GRKKRRQRRRAPPDSEVHQVSLPKQPASQPQGDPTGPKESKKKVERETETDPVH) is disordered. The Nuclear localization signal, RNA-binding (TAR), and protein transduction motif lies at 49-57 (RKKRRQRRR). The tract at residues 49–86 (RKKRRQRRRAPPDSEVHQVSLPKQPASQPQGDPTGPKE) is interaction with the host capping enzyme RNGTT. 2 positions are modified to N6-acetyllysine; by host EP300 and GCN5L2: Lys-50 and Lys-51. Asymmetric dimethylarginine; by host PRMT6 occurs at positions 52 and 53. Residue Lys-71 forms a Glycyl lysine isopeptide (Lys-Gly) (interchain with G-Cter in ubiquitin) linkage. Residues 83–101 (GPKESKKKVERETETDPVH) show a composition bias toward basic and acidic residues.

This sequence belongs to the lentiviruses Tat family. As to quaternary structure, interacts with host CCNT1. Associates with the P-TEFb complex composed at least of Tat, P-TEFb (CDK9 and CCNT1), TAR RNA, RNA Pol II. Recruits the HATs CREBBP, TAF1/TFIID, EP300, PCAF and GCN5L2. Interacts with host KAT5/Tip60; this interaction targets the latter to degradation. Interacts with the host deacetylase SIRT1. Interacts with host capping enzyme RNGTT; this interaction stimulates RNGTT. Binds to host KDR, and to the host integrins ITGAV/ITGB3 and ITGA5/ITGB1. Interacts with host KPNB1/importin beta-1 without previous binding to KPNA1/importin alpha-1. Interacts with EIF2AK2. Interacts with host nucleosome assembly protein NAP1L1; this interaction may be required for the transport of Tat within the nucleus, since the two proteins interact at the nuclear rim. Interacts with host C1QBP/SF2P32; this interaction involves lysine-acetylated Tat. Interacts with the host chemokine receptors CCR2, CCR3 and CXCR4. Interacts with host DPP4/CD26; this interaction may trigger an anti-proliferative effect. Interacts with host LDLR. Interacts with the host extracellular matrix metalloproteinase MMP1. Interacts with host PRMT6; this interaction mediates Tat's methylation. Interacts with, and is ubiquitinated by MDM2/Hdm2. Interacts with host PSMC3 and HTATIP2. Interacts with STAB1; this interaction may overcome SATB1-mediated repression of IL2 and IL2RA (interleukin) in T cells by binding to the same domain than HDAC1. Interacts (when acetylated) with human CDK13, thereby increasing HIV-1 mRNA splicing and promoting the production of the doubly spliced HIV-1 protein Nef. Interacts with host TBP; this interaction modulates the activity of transcriptional pre-initiation complex. Interacts with host RELA. Interacts with host PLSCR1; this interaction negatively regulates Tat transactivation activity by altering its subcellular distribution. Post-translationally, asymmetrical arginine methylation by host PRMT6 seems to diminish the transactivation capacity of Tat and affects the interaction with host CCNT1. In terms of processing, acetylation by EP300, CREBBP, GCN5L2/GCN5 and PCAF regulates the transactivation activity of Tat. EP300-mediated acetylation of Lys-50 promotes dissociation of Tat from the TAR RNA through the competitive binding to PCAF's bromodomain. In addition, the non-acetylated Tat's N-terminus can also interact with PCAF. PCAF-mediated acetylation of Lys-28 enhances Tat's binding to CCNT1. Lys-50 is deacetylated by SIRT1. Polyubiquitination by host MDM2 does not target Tat to degradation, but activates its transactivation function and fosters interaction with CCNT1 and TAR RNA. Post-translationally, phosphorylated by EIF2AK2 on serine and threonine residues adjacent to the basic region important for TAR RNA binding and function. Phosphorylation of Tat by EIF2AK2 is dependent on the prior activation of EIF2AK2 by dsRNA.

The protein resides in the host nucleus. Its subcellular location is the host nucleolus. The protein localises to the host cytoplasm. It is found in the secreted. In terms of biological role, transcriptional activator that increases RNA Pol II processivity, thereby increasing the level of full-length viral transcripts. Recognizes a hairpin structure at the 5'-LTR of the nascent viral mRNAs referred to as the transactivation responsive RNA element (TAR) and recruits the cyclin T1-CDK9 complex (P-TEFb complex) that will in turn hyperphosphorylate the RNA polymerase II to allow efficient elongation. The CDK9 component of P-TEFb and other Tat-activated kinases hyperphosphorylate the C-terminus of RNA Pol II that becomes stabilized and much more processive. Other factors such as HTATSF1/Tat-SF1, SUPT5H/SPT5, and HTATIP2 are also important for Tat's function. Besides its effect on RNA Pol II processivity, Tat induces chromatin remodeling of proviral genes by recruiting the histone acetyltransferases (HATs) CREBBP, EP300 and PCAF to the chromatin. This also contributes to the increase in proviral transcription rate, especially when the provirus integrates in transcriptionally silent region of the host genome. To ensure maximal activation of the LTR, Tat mediates nuclear translocation of NF-kappa-B by interacting with host RELA. Through its interaction with host TBP, Tat may also modulate transcription initiation. Tat can reactivate a latently infected cell by penetrating in it and transactivating its LTR promoter. In the cytoplasm, Tat is thought to act as a translational activator of HIV-1 mRNAs. Its function is as follows. Extracellular circulating Tat can be endocytosed by surrounding uninfected cells via the binding to several surface receptors such as CD26, CXCR4, heparan sulfate proteoglycans (HSPG) or LDLR. Neurons are rarely infected, but they internalize Tat via their LDLR. Through its interaction with nuclear HATs, Tat is potentially able to control the acetylation-dependent cellular gene expression. Modulates the expression of many cellular genes involved in cell survival, proliferation or in coding for cytokines or cytokine receptors. Tat plays a role in T-cell and neurons apoptosis. Tat induced neurotoxicity and apoptosis probably contribute to neuroAIDS. Circulating Tat also acts as a chemokine-like and/or growth factor-like molecule that binds to specific receptors on the surface of the cells, affecting many cellular pathways. In the vascular system, Tat binds to ITGAV/ITGB3 and ITGA5/ITGB1 integrins dimers at the surface of endothelial cells and competes with bFGF for heparin-binding sites, leading to an excess of soluble bFGF. The chain is Protein Tat from Human immunodeficiency virus type 1 group M subtype B (isolate SF162) (HIV-1).